The sequence spans 302 residues: Probable 2-(5''-triphosphoribosyl)-3'-dephosphocoenzyme-A synthase (302 aa).

It belongs to the CitG/MdcB family.

The catalysed reaction is 3'-dephospho-CoA + ATP = 2'-(5''-triphospho-alpha-D-ribosyl)-3'-dephospho-CoA + adenine. In Citrobacter koseri (strain ATCC BAA-895 / CDC 4225-83 / SGSC4696), this protein is Probable 2-(5''-triphosphoribosyl)-3'-dephosphocoenzyme-A synthase.